The following is a 372-amino-acid chain: N-methyl-L-tryptophan oxidase (372 aa).

4-34 (DLIIIGSGSVGAAAGYYATRAGLNVLMTDAH) serves as a coordination point for FAD. Cys-308 bears the S-8alpha-FAD cysteine mark.

It belongs to the MSOX/MTOX family. MTOX subfamily. In terms of assembly, monomer. The cofactor is FAD.

It carries out the reaction N(alpha)-methyl-L-tryptophan + O2 + H2O = L-tryptophan + formaldehyde + H2O2. In terms of biological role, catalyzes the oxidative demethylation of N-methyl-L-tryptophan. This chain is N-methyl-L-tryptophan oxidase, found in Escherichia coli O7:K1 (strain IAI39 / ExPEC).